The chain runs to 82 residues: Acyl carrier protein (82 aa).

The Carrier domain maps to 2 to 77 (DNVADRVKKV…QAIDYVSAHI (76 aa)). The residue at position 37 (S37) is an O-(pantetheine 4'-phosphoryl)serine.

Belongs to the acyl carrier protein (ACP) family. 4'-phosphopantetheine is transferred from CoA to a specific serine of apo-ACP by AcpS. This modification is essential for activity because fatty acids are bound in thioester linkage to the sulfhydryl of the prosthetic group.

It is found in the cytoplasm. Its pathway is lipid metabolism; fatty acid biosynthesis. In terms of biological role, carrier of the growing fatty acid chain in fatty acid biosynthesis. In Acidithiobacillus ferrooxidans (strain ATCC 23270 / DSM 14882 / CIP 104768 / NCIMB 8455) (Ferrobacillus ferrooxidans (strain ATCC 23270)), this protein is Acyl carrier protein.